The chain runs to 237 residues: Sugar fermentation stimulation protein homolog (237 aa).

The protein belongs to the SfsA family.

This Azorhizobium caulinodans (strain ATCC 43989 / DSM 5975 / JCM 20966 / LMG 6465 / NBRC 14845 / NCIMB 13405 / ORS 571) protein is Sugar fermentation stimulation protein homolog.